The following is a 1018-amino-acid chain: Cytadherence high molecular weight protein 1 (1018 aa).

2 coiled-coil regions span residues 782-815 (NRFLLIKKELQAELTRLIEENEQLKAEFLNAKDL) and 849-880 (ELVRNIQKAILENESKIKNIQITLKELKAVYK).

In terms of processing, phosphorylated mainly on serine residues.

It is found in the cell projection. Its subcellular location is the attachment organelle membrane. In terms of biological role, component of the cytoskeleton-like structure which stabilizes the shape of the wall-less Mycoplasma. This cytoskeleton-like network of accessory proteins containing HMW proteins 1 to 5 allows the proper anchoring of cytadhesin proteins in the mycoplasmal membrane at the attachment organelle. The polypeptide is Cytadherence high molecular weight protein 1 (hmw1) (Mycoplasma pneumoniae (strain ATCC 29342 / M129 / Subtype 1) (Mycoplasmoides pneumoniae)).